The following is a 178-amino-acid chain: Ribosome maturation factor RimM (178 aa).

The 79-residue stretch at 100 to 178 folds into the PRC barrel domain; the sequence is AADEYYWYQL…VMRVEWDADF (79 aa).

The protein belongs to the RimM family. Binds ribosomal protein uS19.

The protein resides in the cytoplasm. An accessory protein needed during the final step in the assembly of 30S ribosomal subunit, possibly for assembly of the head region. Essential for efficient processing of 16S rRNA. May be needed both before and after RbfA during the maturation of 16S rRNA. It has affinity for free ribosomal 30S subunits but not for 70S ribosomes. The polypeptide is Ribosome maturation factor RimM (Pseudomonas putida (strain W619)).